Consider the following 1774-residue polypeptide: Protein TIC 214 (1774 aa).

6 consecutive transmembrane segments (helical) span residues 19–39, 68–88, 91–111, 133–153, 176–196, and 227–247; these read IINS…FSIG, FIAG…HLAL, PHTI…WNNH, VFLN…SSML, VGWL…LVWI, and IFSI…PSPI. Basic and acidic residues predominate over residues 254–268; it reads GTSETEERGGTKQDQ. The tract at residues 254–275 is disordered; that stretch reads GTSETEERGGTKQDQEVSTEEA.

It belongs to the TIC214 family. Part of the Tic complex.

Its subcellular location is the plastid. The protein resides in the chloroplast inner membrane. Functionally, involved in protein precursor import into chloroplasts. May be part of an intermediate translocation complex acting as a protein-conducting channel at the inner envelope. This Aethionema cordifolium (Lebanon stonecress) protein is Protein TIC 214.